The sequence spans 50 residues: HILKHNGSKPIRCPECNYTCVNRSMLTSHMKSHSNTYPYRCLDCNYATKY.

3 C2H2-type zinc fingers span residues 1 to 5, 11 to 33, and 39 to 50; these read HILKH, IRCP…MKSH, and YRCLDCNYATKY.

This sequence belongs to the hunchback C2H2-type zinc-finger protein family.

The protein resides in the nucleus. Functionally, gap class segmentation protein that controls development of head structures. The protein is Protein hunchback (hb) of Bradysia coprophila (Dark-winged fungus gnat).